The chain runs to 362 residues: D-alanine--D-alanine ligase (362 aa).

Residues 134–345 (KILAQRAGVP…YPDLITRLIR (212 aa)) form the ATP-grasp domain. 170-225 (GQLGTSNLFVKPSNQGSSVGITHVTDDSNYAEALAEAFKYDDKVLVEEGIVGTEVE) provides a ligand contact to ATP. Mg(2+)-binding residues include aspartate 298, glutamate 312, and asparagine 314.

The protein belongs to the D-alanine--D-alanine ligase family. The cofactor is Mg(2+). It depends on Mn(2+) as a cofactor.

The protein localises to the cytoplasm. It carries out the reaction 2 D-alanine + ATP = D-alanyl-D-alanine + ADP + phosphate + H(+). It participates in cell wall biogenesis; peptidoglycan biosynthesis. In terms of biological role, cell wall formation. The sequence is that of D-alanine--D-alanine ligase from Lactobacillus delbrueckii subsp. bulgaricus (strain ATCC 11842 / DSM 20081 / BCRC 10696 / JCM 1002 / NBRC 13953 / NCIMB 11778 / NCTC 12712 / WDCM 00102 / Lb 14).